The chain runs to 96 residues: Large ribosomal subunit protein bL28 (96 aa).

The protein belongs to the bacterial ribosomal protein bL28 family.

This Methylobacterium sp. (strain 4-46) protein is Large ribosomal subunit protein bL28.